We begin with the raw amino-acid sequence, 442 residues long: D-serine dehydratase 2 (442 aa).

N6-(pyridoxal phosphate)lysine is present on Lys118.

Belongs to the serine/threonine dehydratase family. DsdA subfamily. As to quaternary structure, monomer. The cofactor is pyridoxal 5'-phosphate.

It catalyses the reaction D-serine = pyruvate + NH4(+). This Escherichia coli O6:K15:H31 (strain 536 / UPEC) protein is D-serine dehydratase 2.